Consider the following 415-residue polypeptide: Multidrug resistance protein MdtA (415 aa).

An N-terminal signal peptide occupies residues 1–21 (MKGSYKSRWVIVIVVVIAAIA). Residues 31–47 (DSQSAAPGATKQAQQSP) show a composition bias toward polar residues. Disordered regions lie at residues 31-60 (DSQS…GPLA) and 392-415 (EAQS…GARS). Residues 399–415 (SEEKATSREYAKKGARS) show a composition bias toward basic and acidic residues.

It belongs to the membrane fusion protein (MFP) (TC 8.A.1) family. Part of a tripartite efflux system composed of MdtA, MdtB and MdtC.

The protein resides in the cell inner membrane. Its function is as follows. The MdtABC tripartite complex confers resistance against novobiocin and deoxycholate. This chain is Multidrug resistance protein MdtA, found in Escherichia coli O139:H28 (strain E24377A / ETEC).